A 948-amino-acid chain; its full sequence is Insulin receptor substrate 1 (948 aa).

The region spanning 8–109 (GMALSGYLKK…WLDKLLVLQR (102 aa)) is the PH domain. The IRS-type PTB domain occupies 122–236 (YDQVWQVVIQ…SAMSAKTESN (115 aa)). The segment at 247 to 270 (PDLSHEPMRKRSSSANEASKPINV) is disordered. Ser286 and Ser287 each carry phosphoserine. Positions 304 to 329 (RNGTLSESSNQTYFGSNHGLRSNTIS) are enriched in polar residues. The disordered stretch occupies residues 304–373 (RNGTLSESSN…SDDNGSFSHY (70 aa)). Phosphoserine is present on Ser342. Position 410 is a phosphotyrosine; by INSR (Tyr410). The YXXM motif 1 signature appears at 410–413 (YIPM). Residues 528–559 (ANRSQSSITKEGTSYSTSSNRQKKSTSAPLLS) form a disordered region. A compositionally biased stretch (polar residues) spans 529 to 556 (NRSQSSITKEGTSYSTSSNRQKKSTSAP). Ser554 bears the Phosphoserine mark. The short motif at 640–643 (YLEM) is the YXXM motif 2 element. A disordered region spans residues 703 to 734 (EKKSNSPLNETPCSLKPTDVESNSHDEHSTNN). The segment covering 720 to 731 (TDVESNSHDEHS) has biased composition (basic and acidic residues). The residue at position 891 (Tyr891) is a Phosphotyrosine; by INSR. The disordered stretch occupies residues 907–948 (YLKRGSRESPPVSACPGDGNTYAKIDFDQSDSSSSSSNIFNT). 2 positions are modified to phosphoserine: Ser912 and Ser915. Tyr928 carries the post-translational modification Phosphotyrosine; by INSR. Residues 936 to 948 (SDSSSSSSNIFNT) are compositionally biased toward low complexity.

As to quaternary structure, bindings to phosphatidylinositol 3-kinase and SHP2.

Activates phosphatidylinositol 3-kinase when bound to the regulatory p85 subunit. May mediate the control of various cellular processes by insulin-like peptides. When phosphorylated by the insulin receptor binds specifically to various cellular proteins containing SH2 domains. Involved in control of cell proliferation, cell size, and body and organ growth throughout development. Also has a role in a signaling pathway controlling the physiological response required to endure periods of low nutrient conditions. Insulin/insulin-like growth factor (IGF) signaling pathway has a role in regulating aging and is necessary in the ovary for vitellogenic maturation. This Drosophila erecta (Fruit fly) protein is Insulin receptor substrate 1.